The primary structure comprises 207 residues: MPKVIGLTGGIASGKSTVSELLSVFGFKVVDADKAAREAVKKGSKGLAQVREVFGDEAIDENGEMNRRYMGDLVFNHPEKRLELNAIIHPIVRDIMEEEKQEYLKQGYNVIMDIPLLFENELENTVDEVWVVYTSESIQMDRLMQRNNLSLEDAKARVYSQISIDKKSRMADHVIDNLGDKLELKQNLERLLEEEGYIEKPNYGEGD.

One can recognise a DPCK domain in the interval 4-203 (VIGLTGGIAS…EEGYIEKPNY (200 aa)). 12 to 17 (ASGKST) contributes to the ATP binding site.

This sequence belongs to the CoaE family.

It localises to the cytoplasm. It carries out the reaction 3'-dephospho-CoA + ATP = ADP + CoA + H(+). It participates in cofactor biosynthesis; coenzyme A biosynthesis; CoA from (R)-pantothenate: step 5/5. Catalyzes the phosphorylation of the 3'-hydroxyl group of dephosphocoenzyme A to form coenzyme A. In Staphylococcus aureus (strain MRSA252), this protein is Dephospho-CoA kinase.